A 219-amino-acid chain; its full sequence is Transmembrane protein 247 (219 aa).

2 stretches are compositionally biased toward basic and acidic residues: residues 1–10 and 29–45; these read MAAEDREMME and SKSEGKPRAYLEAESQK. The interval 1 to 101 is disordered; the sequence is MAAEDREMME…LPPTPGTERN (101 aa). Positions 121–156 form a coiled coil; sequence LHEKNQRQRQHEVVMEQLQRERQHEVVMEQLQQEAA. A run of 2 helical transmembrane segments spans residues 167–187 and 194–214; these read FLLPQNQFAMFLYCFIFIHII and VFFLFAKHYLFCIAAILLCLI.

The protein resides in the membrane. The sequence is that of Transmembrane protein 247 (TMEM247) from Homo sapiens (Human).